A 619-amino-acid polypeptide reads, in one-letter code: Telomere repeat-binding protein 3 (619 aa).

The region spanning 324–403 is the Ubiquitin-like domain; sequence VKLSIKSFRI…LDNLGFTLEP (80 aa). Positions 504–563 constitute an HTH myb-type domain; sequence AQRRTRRPFSVTEVEALVQAVEELGTGRWRDVKLRAFEDADHRTYVDLKDKWKTLVHTAS. A DNA-binding region (H-T-H motif) is located at residues 532 to 559; sequence WRDVKLRAFEDADHRTYVDLKDKWKTLV. Residues 593–619 are disordered; the sequence is QGKHQARGASKDPDMNRGGAFESGVSV.

In terms of assembly, homodimer and heterodimer with TRP1. As to expression, expressed ubiquitously. Highest expression in flowers and roots.

It localises to the nucleus. In terms of biological role, binds specifically to the plant telomeric double-stranded DNA sequences. At least 2 repeats of telomeric sequences are required for binding. Induces DNA bending. The protein is Telomere repeat-binding protein 3 (TRP3) of Arabidopsis thaliana (Mouse-ear cress).